Here is a 161-residue protein sequence, read N- to C-terminus: Methylated-DNA--protein-cysteine methyltransferase (161 aa).

The active-site Nucleophile; methyl group acceptor is the Cys-128.

This sequence belongs to the MGMT family.

It is found in the cytoplasm. The enzyme catalyses a 6-O-methyl-2'-deoxyguanosine in DNA + L-cysteinyl-[protein] = S-methyl-L-cysteinyl-[protein] + a 2'-deoxyguanosine in DNA. It catalyses the reaction a 4-O-methyl-thymidine in DNA + L-cysteinyl-[protein] = a thymidine in DNA + S-methyl-L-cysteinyl-[protein]. Its function is as follows. Involved in the cellular defense against the biological effects of O6-methylguanine (O6-MeG) and O4-methylthymine (O4-MeT) in DNA. Repairs the methylated nucleobase in DNA by stoichiometrically transferring the methyl group to a cysteine residue in the enzyme. This is a suicide reaction: the enzyme is irreversibly inactivated. The protein is Methylated-DNA--protein-cysteine methyltransferase of Methanocaldococcus vulcanius (strain ATCC 700851 / DSM 12094 / M7) (Methanococcus vulcanius).